The sequence spans 162 residues: Peptide deformylase-like (162 aa).

Belongs to the polypeptide deformylase family.

In Staphylococcus epidermidis (strain ATCC 35984 / DSM 28319 / BCRC 17069 / CCUG 31568 / BM 3577 / RP62A), this protein is Peptide deformylase-like.